A 227-amino-acid chain; its full sequence is Ribosomal RNA large subunit methyltransferase E (227 aa).

The S-adenosyl-L-methionine site is built by G78, W80, D103, D119, and D143. The Proton acceptor role is filled by K183.

The protein belongs to the class I-like SAM-binding methyltransferase superfamily. RNA methyltransferase RlmE family.

The protein localises to the cytoplasm. The enzyme catalyses uridine(2552) in 23S rRNA + S-adenosyl-L-methionine = 2'-O-methyluridine(2552) in 23S rRNA + S-adenosyl-L-homocysteine + H(+). Functionally, specifically methylates the uridine in position 2552 of 23S rRNA at the 2'-O position of the ribose in the fully assembled 50S ribosomal subunit. In Rickettsia peacockii (strain Rustic), this protein is Ribosomal RNA large subunit methyltransferase E.